We begin with the raw amino-acid sequence, 138 residues long: MAARLCCQLDSSRDVVLLRPFGSESGGPAVSRPSAGSASRADSPLPSAAESHLPLGRLPACFASPSGPCCLGFTCAEFGAMVSTMNFVTWHAKRQLGMPTKDLWTPYVRNQLLTKWEEGTIDSRLPLFVLGGCRHKYM.

The segment at 24–48 (ESGGPAVSRPSAGSASRADSPLPSA) is disordered. The mitochondrial targeting sequence stretch occupies residues 68 to 113 (PCCLGFTCAEFGAMVSTMNFVTWHAKRQLGMPTKDLWTPYVRNQLL).

The protein belongs to the orthohepadnavirus protein X family. In terms of assembly, may form homodimer. May interact with host CEBPA, CFLAR, CREB1, DDB1, E4F1, HBXIP, HSPD1/HSP60, NFKBIA, POLR2E and SMAD4. Interacts with host SMC5-SMC6 complex and induces its degradation. Interacts with host TRPC4AP; leading to prevent ubiquitination of TRPC4AP. Interacts with host PLSCR1; this interaction promotes ubiquitination and degradation of HBx and impairs HBx-mediated cell proliferation. Post-translationally, a fraction may be phosphorylated in insect cells and HepG2 cells, a human hepatoblastoma cell line. Phosphorylated in vitro by host protein kinase C or mitogen-activated protein kinase. N-acetylated in insect cells.

Its subcellular location is the host cytoplasm. It localises to the host nucleus. It is found in the host mitochondrion. Functionally, multifunctional protein that plays a role in silencing host antiviral defenses and promoting viral transcription. Does not seem to be essential for HBV infection. May be directly involved in development of cirrhosis and liver cancer (hepatocellular carcinoma). Most of cytosolic activities involve modulation of cytosolic calcium. The effect on apoptosis is controversial depending on the cell types in which the studies have been conducted. May induce apoptosis by localizing in mitochondria and causing loss of mitochondrial membrane potential. May also modulate apoptosis by binding host CFLAR, a key regulator of the death-inducing signaling complex (DISC). Promotes viral transcription by using the host E3 ubiquitin ligase DDB1 to target the SMC5-SMC6 complex to proteasomal degradation. This host complex would otherwise bind to viral episomal DNA, and prevents its transcription. Moderately stimulates transcription of many different viral and cellular transcription elements. Promoters and enhancers stimulated by HBx contain DNA binding sites for NF-kappa-B, AP-1, AP-2, c-EBP, ATF/CREB, or the calcium-activated factor NF-AT. The chain is Protein X from Arctic squirrel hepatitis virus (ASHV).